Consider the following 123-residue polypeptide: Small ribosomal subunit protein uS13 (123 aa).

The disordered stretch occupies residues 95-123; that stretch reads GLPVRGQRTKTNARTRKGPIKTVGAKRKK.

The protein belongs to the universal ribosomal protein uS13 family. In terms of assembly, part of the 30S ribosomal subunit. Forms a loose heterodimer with protein S19. Forms two bridges to the 50S subunit in the 70S ribosome.

Functionally, located at the top of the head of the 30S subunit, it contacts several helices of the 16S rRNA. In the 70S ribosome it contacts the 23S rRNA (bridge B1a) and protein L5 of the 50S subunit (bridge B1b), connecting the 2 subunits; these bridges are implicated in subunit movement. Contacts the tRNAs in the A and P-sites. This Desulfitobacterium hafniense (strain DSM 10664 / DCB-2) protein is Small ribosomal subunit protein uS13.